Here is a 543-residue protein sequence, read N- to C-terminus: Probable bifunctional tRNA threonylcarbamoyladenosine biosynthesis protein (543 aa).

The interval 1 to 329 is kae1; that stretch reads MDISKDLICI…YRSDMVEVNW (329 aa). The Fe cation site is built by histidine 112, histidine 116, and tyrosine 133. L-threonylcarbamoyladenylate contacts are provided by residues 133-137, aspartate 165, glycine 178, glutamate 182, and asparagine 262; that span reads YVSGG. Aspartate 290 contacts Fe cation. The 202-residue stretch at 342–543 folds into the Protein kinase domain; it reads IIPEHLIGKG…KEVEKRARYL (202 aa). ATP is bound by residues 348 to 356 and lysine 369; that span reads IGKGAEADI. The Proton acceptor; for kinase activity role is filled by aspartate 461.

This sequence in the N-terminal section; belongs to the KAE1 / TsaD family. It in the C-terminal section; belongs to the protein kinase superfamily. Tyr protein kinase family. BUD32 subfamily. Component of the KEOPS complex that consists of Kae1, Bud32, Cgi121 and Pcc1; the whole complex dimerizes. Fe(2+) serves as cofactor.

The protein resides in the cytoplasm. The catalysed reaction is L-seryl-[protein] + ATP = O-phospho-L-seryl-[protein] + ADP + H(+). The enzyme catalyses L-threonyl-[protein] + ATP = O-phospho-L-threonyl-[protein] + ADP + H(+). It carries out the reaction L-threonylcarbamoyladenylate + adenosine(37) in tRNA = N(6)-L-threonylcarbamoyladenosine(37) in tRNA + AMP + H(+). Its function is as follows. Required for the formation of a threonylcarbamoyl group on adenosine at position 37 (t(6)A37) in tRNAs that read codons beginning with adenine. Is a component of the KEOPS complex that is probably involved in the transfer of the threonylcarbamoyl moiety of threonylcarbamoyl-AMP (TC-AMP) to the N6 group of A37. The Kae1 domain likely plays a direct catalytic role in this reaction. The Bud32 domain probably displays kinase activity that regulates Kae1 function. In Methanococcus maripaludis (strain C6 / ATCC BAA-1332), this protein is Probable bifunctional tRNA threonylcarbamoyladenosine biosynthesis protein.